A 398-amino-acid chain; its full sequence is Thyrotropin-releasing hormone receptor (398 aa).

The Extracellular segment spans residues 1-28 (MENETGSELNQTQLQPRAVVALEYQVVT). N-linked (GlcNAc...) asparagine glycosylation is found at N3 and N10. A helical membrane pass occupies residues 29–51 (ILLVLIICGLGIVGNIMVVLVVM). Residues 52–61 (RTKHMRTPTN) lie on the Cytoplasmic side of the membrane. Residues 62 to 83 (CYLVSLAVADLMVLVAAGLPNI) form a helical membrane-spanning segment. Residues 84-99 (TDSIYGSWVYGYVGCL) lie on the Extracellular side of the membrane. An intrachain disulfide couples C98 to C179. The helical transmembrane segment at 100 to 121 (CITYLQYLGINASSCSITAFTI) threads the bilayer. Over 122-144 (ERYIAICHPIKAQFLCTFSRAKK) the chain is Cytoplasmic. Residues 145 to 168 (IIIFVWAFTSIYCMLWFFLLDLNI) traverse the membrane as a helical segment. Residues 169–193 (STYKDAIVVSCGYKISRNYYSPIYL) lie on the Extracellular side of the membrane. The chain crosses the membrane as a helical span at residues 194 to 215 (MDFGVFYVVPMILATVLYGFIA). Over 216–266 (RILFLSPIPSDPKENSNTWKNDSTHQNKNLNSKTSNRYFNSTVSSRKQVTK) the chain is Cytoplasmic. Residues 267 to 288 (MLAVVVILFALLWMPYRTLVVV) traverse the membrane as a helical segment. Residues 289-296 (NSFLSSPF) are Extracellular-facing. A helical transmembrane segment spans residues 297–319 (QENWFLLFCRICIYLNSAINPVI). The Cytoplasmic segment spans residues 320 to 398 (YNLMSQKFRA…LASEVTFSQS (79 aa)).

The protein belongs to the G-protein coupled receptor 1 family.

Its subcellular location is the cell membrane. Receptor for thyrotropin-releasing hormone (TRH). Upon ligand binding, this G-protein-coupled receptor triggers activation of the phosphatidylinositol (IP3)-calcium-protein kinase C (PKC) pathway. This chain is Thyrotropin-releasing hormone receptor (TRHR), found in Ovis aries (Sheep).